The sequence spans 30 residues: Bacteriocin plantaricin KL-1Y (30 aa).

It is found in the secreted. In terms of biological role, bacteriocin with activity against species of Lactobacillus, Lactococcus, Pediococcus, Leuconostoc and against B.subtilis and, to a lesser extent, against B.coagulans, B.cereus and species of Enterococcus, Listeria, Kocuria, Staphylococcus, Corynebacterium, Salmonella, Pseudomonas and Escherichia. This Lactiplantibacillus plantarum (Lactobacillus plantarum) protein is Bacteriocin plantaricin KL-1Y.